The sequence spans 284 residues: N-methyltransferase sirN (284 aa).

This sequence belongs to the methyltransferase superfamily. LaeA methyltransferase family.

It participates in mycotoxin biosynthesis. Functionally, N-methyltransferase; part of the gene cluster that mediates the biosynthesis of sirodesmin PL, an epipolythiodioxopiperazine (ETP) characterized by a disulfide bridged cyclic dipeptide and that acts as a phytotoxin which is involved in the blackleg didease of canola. SirD catalyzes the O-prenylation of L-tyrosine (L-Tyr) in the presence of dimethylallyl diphosphate (DMAPP) to yield 4-O-dimethylallyl-L-Tyr, and therefore represents probably the first pathway-specific enzyme in the biosynthesis of sirodesmin PL. 4-O-dimethylallyl-L-Tyr, then undergoes condensation with L-Ser in a reaction catalyzed by the non-ribosomal peptide synthase sirP to form the diketopiperazine (DKP) backbone. Further bishydroxylation of the DKP performed by the cytochrome P450 monooxygenase sirC leads to the production of the intermediate phomamide. This step is essential to form the reactive thiol group required for toxicity of sirodesmin PL. The next steps of sirodesmin biosynthesis are not well understood yet but some predictions could be made from intermediate compounds identification. Phomamide is converted into phomalizarine via oxidation, probably by sirT. Further oxidation, methylation (by sirM or sirN) and reduction steps convert phomalizarine to deacetyl sirodesmin. Finally, acetyltransferase sirH probably acetylates deacetyl sirodesmin to produce sirodesmin PL. The polypeptide is N-methyltransferase sirN (Leptosphaeria maculans (Blackleg fungus)).